The following is a 165-amino-acid chain: Crossover junction endodeoxyribonuclease RuvC (165 aa).

Active-site residues include aspartate 7, glutamate 66, and aspartate 138. Aspartate 7, glutamate 66, and aspartate 138 together coordinate Mg(2+).

The protein belongs to the RuvC family. In terms of assembly, homodimer which binds Holliday junction (HJ) DNA. The HJ becomes 2-fold symmetrical on binding to RuvC with unstacked arms; it has a different conformation from HJ DNA in complex with RuvA. In the full resolvosome a probable DNA-RuvA(4)-RuvB(12)-RuvC(2) complex forms which resolves the HJ. Mg(2+) is required as a cofactor.

The protein resides in the cytoplasm. It catalyses the reaction Endonucleolytic cleavage at a junction such as a reciprocal single-stranded crossover between two homologous DNA duplexes (Holliday junction).. Functionally, the RuvA-RuvB-RuvC complex processes Holliday junction (HJ) DNA during genetic recombination and DNA repair. Endonuclease that resolves HJ intermediates. Cleaves cruciform DNA by making single-stranded nicks across the HJ at symmetrical positions within the homologous arms, yielding a 5'-phosphate and a 3'-hydroxyl group; requires a central core of homology in the junction. The consensus cleavage sequence is 5'-(A/T)TT(C/G)-3'. Cleavage occurs on the 3'-side of the TT dinucleotide at the point of strand exchange. HJ branch migration catalyzed by RuvA-RuvB allows RuvC to scan DNA until it finds its consensus sequence, where it cleaves and resolves the cruciform DNA. The polypeptide is Crossover junction endodeoxyribonuclease RuvC (Ruegeria pomeroyi (strain ATCC 700808 / DSM 15171 / DSS-3) (Silicibacter pomeroyi)).